Reading from the N-terminus, the 269-residue chain is Ribosomal RNA small subunit methyltransferase A (269 aa).

S-adenosyl-L-methionine contacts are provided by histidine 11, leucine 13, glycine 38, glutamate 59, aspartate 84, and asparagine 105.

Belongs to the class I-like SAM-binding methyltransferase superfamily. rRNA adenine N(6)-methyltransferase family. RsmA subfamily.

It is found in the cytoplasm. The enzyme catalyses adenosine(1518)/adenosine(1519) in 16S rRNA + 4 S-adenosyl-L-methionine = N(6)-dimethyladenosine(1518)/N(6)-dimethyladenosine(1519) in 16S rRNA + 4 S-adenosyl-L-homocysteine + 4 H(+). Its function is as follows. Specifically dimethylates two adjacent adenosines (A1518 and A1519) in the loop of a conserved hairpin near the 3'-end of 16S rRNA in the 30S particle. May play a critical role in biogenesis of 30S subunits. The protein is Ribosomal RNA small subunit methyltransferase A of Acaryochloris marina (strain MBIC 11017).